The sequence spans 354 residues: Uroporphyrinogen decarboxylase (354 aa).

Substrate is bound by residues 27 to 31 (RQAGR), Asp77, Tyr154, Thr209, and His327.

Belongs to the uroporphyrinogen decarboxylase family. As to quaternary structure, homodimer.

It is found in the cytoplasm. The catalysed reaction is uroporphyrinogen III + 4 H(+) = coproporphyrinogen III + 4 CO2. It participates in porphyrin-containing compound metabolism; protoporphyrin-IX biosynthesis; coproporphyrinogen-III from 5-aminolevulinate: step 4/4. Its function is as follows. Catalyzes the decarboxylation of four acetate groups of uroporphyrinogen-III to yield coproporphyrinogen-III. The sequence is that of Uroporphyrinogen decarboxylase from Enterobacter sp. (strain 638).